We begin with the raw amino-acid sequence, 254 residues long: Imidazole glycerol phosphate synthase subunit HisF (254 aa).

Catalysis depends on residues Asp-11 and Asp-130.

Belongs to the HisA/HisF family. Heterodimer of HisH and HisF.

Its subcellular location is the cytoplasm. The catalysed reaction is 5-[(5-phospho-1-deoxy-D-ribulos-1-ylimino)methylamino]-1-(5-phospho-beta-D-ribosyl)imidazole-4-carboxamide + L-glutamine = D-erythro-1-(imidazol-4-yl)glycerol 3-phosphate + 5-amino-1-(5-phospho-beta-D-ribosyl)imidazole-4-carboxamide + L-glutamate + H(+). It participates in amino-acid biosynthesis; L-histidine biosynthesis; L-histidine from 5-phospho-alpha-D-ribose 1-diphosphate: step 5/9. IGPS catalyzes the conversion of PRFAR and glutamine to IGP, AICAR and glutamate. The HisF subunit catalyzes the cyclization activity that produces IGP and AICAR from PRFAR using the ammonia provided by the HisH subunit. The sequence is that of Imidazole glycerol phosphate synthase subunit HisF from Oceanobacillus iheyensis (strain DSM 14371 / CIP 107618 / JCM 11309 / KCTC 3954 / HTE831).